Consider the following 402-residue polypeptide: 1-deoxy-D-xylulose 5-phosphate reductoisomerase (402 aa).

Threonine 10, glycine 11, serine 12, isoleucine 13, glycine 36, arginine 37, asparagine 38, and asparagine 124 together coordinate NADPH. Residue lysine 125 coordinates 1-deoxy-D-xylulose 5-phosphate. Glutamate 126 is an NADPH binding site. Aspartate 150 lines the Mn(2+) pocket. Positions 151, 152, 186, and 209 each coordinate 1-deoxy-D-xylulose 5-phosphate. Residue glutamate 152 participates in Mn(2+) binding. Position 215 (glycine 215) interacts with NADPH. 4 residues coordinate 1-deoxy-D-xylulose 5-phosphate: serine 222, asparagine 227, lysine 228, and glutamate 231. Glutamate 231 lines the Mn(2+) pocket.

It belongs to the DXR family. Mg(2+) serves as cofactor. Mn(2+) is required as a cofactor.

The catalysed reaction is 2-C-methyl-D-erythritol 4-phosphate + NADP(+) = 1-deoxy-D-xylulose 5-phosphate + NADPH + H(+). It participates in isoprenoid biosynthesis; isopentenyl diphosphate biosynthesis via DXP pathway; isopentenyl diphosphate from 1-deoxy-D-xylulose 5-phosphate: step 1/6. With respect to regulation, inhibited by fosmidomycin. Catalyzes the NADPH-dependent rearrangement and reduction of 1-deoxy-D-xylulose-5-phosphate (DXP) to 2-C-methyl-D-erythritol 4-phosphate (MEP). This chain is 1-deoxy-D-xylulose 5-phosphate reductoisomerase, found in Synechococcus sp. (strain ATCC 27144 / PCC 6301 / SAUG 1402/1) (Anacystis nidulans).